We begin with the raw amino-acid sequence, 276 residues long: Undecaprenyl-diphosphatase 2 (276 aa).

The next 8 membrane-spanning stretches (helical) occupy residues 1 to 21 (MSLW…LFPV), 44 to 64 (QLLP…LWYF), 87 to 107 (GHLM…GLLL), 114 to 134 (VFHD…LLWL), 150 to 170 (MTFK…IPGF), 190 to 210 (AAEF…VLEL), 222 to 242 (DALL…RFLM), and 251 to 271 (LASF…WFML).

The protein belongs to the UppP family.

Its subcellular location is the cell inner membrane. It carries out the reaction di-trans,octa-cis-undecaprenyl diphosphate + H2O = di-trans,octa-cis-undecaprenyl phosphate + phosphate + H(+). Catalyzes the dephosphorylation of undecaprenyl diphosphate (UPP). Confers resistance to bacitracin. This Burkholderia orbicola (strain AU 1054) protein is Undecaprenyl-diphosphatase 2.